Here is a 391-residue protein sequence, read N- to C-terminus: Succinate--CoA ligase [ADP-forming] subunit beta (391 aa).

The region spanning 9–247 (KDILAKYGVA…IAEEDPLEVE (239 aa)) is the ATP-grasp domain. Residues lysine 49, 56-58 (GRG), glutamate 102, alanine 105, and glutamate 110 contribute to the ATP site. Residues asparagine 202 and aspartate 216 each contribute to the Mg(2+) site. Residues asparagine 267 and 324 to 326 (GIL) contribute to the substrate site.

Belongs to the succinate/malate CoA ligase beta subunit family. As to quaternary structure, heterotetramer of two alpha and two beta subunits. Mg(2+) is required as a cofactor.

The enzyme catalyses succinate + ATP + CoA = succinyl-CoA + ADP + phosphate. It catalyses the reaction GTP + succinate + CoA = succinyl-CoA + GDP + phosphate. It functions in the pathway carbohydrate metabolism; tricarboxylic acid cycle; succinate from succinyl-CoA (ligase route): step 1/1. In terms of biological role, succinyl-CoA synthetase functions in the citric acid cycle (TCA), coupling the hydrolysis of succinyl-CoA to the synthesis of either ATP or GTP and thus represents the only step of substrate-level phosphorylation in the TCA. The beta subunit provides nucleotide specificity of the enzyme and binds the substrate succinate, while the binding sites for coenzyme A and phosphate are found in the alpha subunit. This chain is Succinate--CoA ligase [ADP-forming] subunit beta, found in Acidobacterium capsulatum (strain ATCC 51196 / DSM 11244 / BCRC 80197 / JCM 7670 / NBRC 15755 / NCIMB 13165 / 161).